A 442-amino-acid chain; its full sequence is Limonoid 1-O-acetyltransferse (442 aa).

Active-site proton acceptor residues include His-155 and Asp-381.

The protein belongs to the plant acyltransferase family. Monomer.

The enzyme catalyses (1S)-1-hydroxy-luvungin A + acetyl-CoA = (1S)-1-acetoxy-luvungin A + CoA. The protein operates within secondary metabolite biosynthesis; terpenoid biosynthesis. Functionally, acetyltransferase involved in the biosynthesis of limonoids triterpene natural products such as limonin, a compound with insecticidal activity responsible for the bitter taste in citrus. Catalyzes the formation of (1S)-1-acetoxy-luvungin A from (1S)-1-hydroxy-luvungin A. The sequence is that of Limonoid 1-O-acetyltransferse from Citrus sinensis (Sweet orange).